A 345-amino-acid chain; its full sequence is Type II methyltransferase M.AplI (345 aa).

The SAM-dependent MTase C5-type domain maps to 25 to 325 (LVVLDLFAGC…KSVKMTLENK (301 aa)). Cysteine 93 is a catalytic residue.

This sequence belongs to the class I-like SAM-binding methyltransferase superfamily. C5-methyltransferase family.

The enzyme catalyses a 2'-deoxycytidine in DNA + S-adenosyl-L-methionine = a 5-methyl-2'-deoxycytidine in DNA + S-adenosyl-L-homocysteine + H(+). A methylase, recognizes the double-stranded sequence 5'-CTGCAG-3', methylates C-4 on both strands, and protects the DNA from cleavage by the AplI endonuclease. The protein is Type II methyltransferase M.AplI (aplIM) of Arthrospira platensis (strain NIES-39 / UTEX 3086 / IAM M-135) (Spirulina platensis).